The following is a 256-amino-acid chain: Ribosomal RNA small subunit methyltransferase A (256 aa).

S-adenosyl-L-methionine is bound by residues histidine 12, leucine 14, glycine 39, glutamate 60, aspartate 81, and asparagine 103.

This sequence belongs to the class I-like SAM-binding methyltransferase superfamily. rRNA adenine N(6)-methyltransferase family. RsmA subfamily.

Its subcellular location is the cytoplasm. It carries out the reaction adenosine(1518)/adenosine(1519) in 16S rRNA + 4 S-adenosyl-L-methionine = N(6)-dimethyladenosine(1518)/N(6)-dimethyladenosine(1519) in 16S rRNA + 4 S-adenosyl-L-homocysteine + 4 H(+). In terms of biological role, specifically dimethylates two adjacent adenosines (A1518 and A1519) in the loop of a conserved hairpin near the 3'-end of 16S rRNA in the 30S particle. May play a critical role in biogenesis of 30S subunits. The protein is Ribosomal RNA small subunit methyltransferase A of Methylibium petroleiphilum (strain ATCC BAA-1232 / LMG 22953 / PM1).